The sequence spans 185 residues: Elongation factor P (185 aa).

This sequence belongs to the elongation factor P family.

The protein resides in the cytoplasm. It participates in protein biosynthesis; polypeptide chain elongation. In terms of biological role, involved in peptide bond synthesis. Stimulates efficient translation and peptide-bond synthesis on native or reconstituted 70S ribosomes in vitro. Probably functions indirectly by altering the affinity of the ribosome for aminoacyl-tRNA, thus increasing their reactivity as acceptors for peptidyl transferase. This chain is Elongation factor P, found in Lactococcus lactis subsp. cremoris (strain MG1363).